The chain runs to 410 residues: O-methyltransferase afvC (410 aa).

Residues 253 to 254 (GG), Asp-278, 299 to 300 (DF), and Arg-315 each bind S-adenosyl-L-methionine. The active-site Proton acceptor is the His-319.

The protein belongs to the class I-like SAM-binding methyltransferase superfamily. Cation-independent O-methyltransferase family. COMT subfamily.

The protein operates within secondary metabolite biosynthesis. Functionally, O-methyltransferase; part of the gene cluster that mediates the biosynthesis of aflavarin, a bicoumarin that exhibits anti-insectan activity against the fungivorous beetle C.hemipterus. This chain is O-methyltransferase afvC, found in Aspergillus flavus (strain ATCC 200026 / FGSC A1120 / IAM 13836 / NRRL 3357 / JCM 12722 / SRRC 167).